The primary structure comprises 491 residues: Argininosuccinate lyase (491 aa).

The protein belongs to the lyase 1 family. Argininosuccinate lyase subfamily.

The protein resides in the cytoplasm. It carries out the reaction 2-(N(omega)-L-arginino)succinate = fumarate + L-arginine. The protein operates within amino-acid biosynthesis; L-arginine biosynthesis; L-arginine from L-ornithine and carbamoyl phosphate: step 3/3. The chain is Argininosuccinate lyase from Methanosarcina acetivorans (strain ATCC 35395 / DSM 2834 / JCM 12185 / C2A).